The following is a 77-amino-acid chain: Serine protease inhibitor 1 (77 aa).

The signal sequence occupies residues 1–17 (MMFTPLIVLTLLVLATA). Disulfide bonds link C21–C53, C30–C48, C33–C44, C37–C74, and C55–C68. The TIL domain maps to 21-74 (CGPNEQWSDCPGCELQCGESDKPCPAMCGDPKCYCSPDQYRRIPDGRCIRKIQC).

The protein localises to the secreted. Its function is as follows. Defends the organism against the host's proteinases. This is Serine protease inhibitor 1 from Anisakis simplex (Herring worm).